The following is an 82-amino-acid chain: Putative membrane protein insertion efficiency factor (82 aa).

Belongs to the UPF0161 family.

The protein resides in the cell inner membrane. Functionally, could be involved in insertion of integral membrane proteins into the membrane. This is Putative membrane protein insertion efficiency factor from Rickettsia peacockii (strain Rustic).